The sequence spans 287 residues: UPF0098 protein AF_1698 (287 aa).

It belongs to the UPF0098 family.

The polypeptide is UPF0098 protein AF_1698 (Archaeoglobus fulgidus (strain ATCC 49558 / DSM 4304 / JCM 9628 / NBRC 100126 / VC-16)).